A 205-amino-acid chain; its full sequence is Beta-crystallin B2 (205 aa).

Alanine 2 carries the post-translational modification N-acetylalanine. The segment at 2-16 (ASDHQTQAGKPQPLN) is N-terminal arm. 2 Beta/gamma crystallin 'Greek key' domains span residues 17–56 (PKII…LVQA) and 57–101 (GPWV…RPIK). The segment at 102 to 106 (VDSQE) is connecting peptide. 2 consecutive Beta/gamma crystallin 'Greek key' domains span residues 107-148 (HKII…RVQS) and 149-191 (GTWV…RRIR). The C-terminal arm stretch occupies residues 193–205 (MQWHQRGAFHPSS).

This sequence belongs to the beta/gamma-crystallin family. Homo/heterodimer, or complexes of higher-order. The structure of beta-crystallin oligomers seems to be stabilized through interactions between the N-terminal arms.

In terms of biological role, crystallins are the dominant structural components of the vertebrate eye lens. The chain is Beta-crystallin B2 (CRYBB2) from Mesocricetus auratus (Golden hamster).